We begin with the raw amino-acid sequence, 510 residues long: MTTIRTLVVAAEAFPLAKTGGLGDAVSGMVQALGHRPGGVDVQCELLMPAYRGTLDMVYRPRTVARLGGLPGGPASLVRGHCPGSGLSVLLLRNDALYDRPGIYVDDSGQGYPDNARRYAALAHAAARLAQGLPGLRPPHVVHAHDWHAALAPLLIHAAGLHYVKTLLTIHNLAFQGTFPAELASALGIPLACRHDDGALSDDSVNFLKAGIRYATRVTTVSRAYAREILTPAFGCGLHGLLRARGADLSPVPNGIDTALWNPAADPHLGGLRFDALDMRNKACCKAALQAELGLQPRADATVLAMGSRLTGQKMADVAIAALPALLEAHEHLQFALIGRGEPALETALRALAARYPGRCAVHIGYDEPLAHRLHAGADLLLHGSRFEPFGLTPLYAMRYGTLPVASRVGGMVDTIRDPGPAVEESCAGQGTGFLFDGSEPADMQLAVARALRALAKPAVCDAMRRNAMQADFSWRASAQAYAGLYASLASAPQRGRVPAPTLPLLANAA.

Lys-18 provides a ligand contact to ADP-alpha-D-glucose.

The protein belongs to the glycosyltransferase 1 family. Bacterial/plant glycogen synthase subfamily.

The enzyme catalyses [(1-&gt;4)-alpha-D-glucosyl](n) + ADP-alpha-D-glucose = [(1-&gt;4)-alpha-D-glucosyl](n+1) + ADP + H(+). It functions in the pathway glycan biosynthesis; glycogen biosynthesis. In terms of biological role, synthesizes alpha-1,4-glucan chains using ADP-glucose. This Bordetella parapertussis (strain 12822 / ATCC BAA-587 / NCTC 13253) protein is Glycogen synthase.